The primary structure comprises 267 residues: MITFQLEQGEKLFIPFMTAGDPSEEITIDLALSLQAAGAHAIELGVPYSDPLADGPVIQRASKRALNHGMNIVKAIELAGKMKKNGVKIPVILFTYYNPVLQLDTEYFFALLRKNHISGLLTPDLPFEESSELQKNCQSYDISYISLVAPTSKERLVNIVEQAEGFVYCVSSLGVTGVRQTFDESITDFIQQVKQLSHIPVAVGFGISTREQVDSMNKLSDGVVVGSALVKKIEELHDQLLASDTRQDALREFETYAKTFSPLYSFK.

Residues E43 and D54 each act as proton acceptor in the active site.

The protein belongs to the TrpA family. As to quaternary structure, tetramer of two alpha and two beta chains.

It carries out the reaction (1S,2R)-1-C-(indol-3-yl)glycerol 3-phosphate + L-serine = D-glyceraldehyde 3-phosphate + L-tryptophan + H2O. It participates in amino-acid biosynthesis; L-tryptophan biosynthesis; L-tryptophan from chorismate: step 5/5. The alpha subunit is responsible for the aldol cleavage of indoleglycerol phosphate to indole and glyceraldehyde 3-phosphate. This chain is Tryptophan synthase alpha chain, found in Bacillus pumilus (strain SAFR-032).